The primary structure comprises 85 residues: Protein AC4 (85 aa).

G2 carries N-myristoyl glycine; by host lipidation.

It belongs to the geminiviridae protein AC4/C4 family. Interacts with Arabidopsis thaliana ASK7/ASK-eta and ASK6/ASK-zeta proteins. Phosphorylated by Arabidopsis thaliana ASK7/ASK-eta mainly on threonine and serine residues.

Its subcellular location is the host cell membrane. Its function is as follows. Pathogenicity determinant. May act as a suppressor of RNA-mediated gene silencing, also known as post-transcriptional gene silencing (PTGS), a mechanism of plant viral defense that limits the accumulation of viral RNAs. May repress the AL61 promoter. This Solanum lycopersicum (Tomato) protein is Protein AC4.